A 139-amino-acid chain; its full sequence is Protein archease (139 aa).

Residues Asp12, Asp138, and Ile139 each coordinate Ca(2+).

This sequence belongs to the archease family.

Functionally, activates the tRNA-splicing ligase complex by facilitating the enzymatic turnover of catalytic subunit RtcB. Acts by promoting the guanylylation of RtcB, a key intermediate step in tRNA ligation. Can also alter the NTP specificity of RtcB such that ATP, dGTP or ITP is used efficiently. The polypeptide is Protein archease (Saccharolobus solfataricus (strain ATCC 35092 / DSM 1617 / JCM 11322 / P2) (Sulfolobus solfataricus)).